Reading from the N-terminus, the 269-residue chain is Gem-associated protein 2 (269 aa).

Phosphoserine is present on residues Ser70 and Ser155.

The protein belongs to the gemin-2 family. Monomer. Part of the core SMN complex that contains SMN1, GEMIN2/SIP1, DDX20/GEMIN3, GEMIN4, GEMIN5, GEMIN6, GEMIN7, GEMIN8 and STRAP/UNRIP. Part of the SMN-Sm complex that contains SMN1, GEMIN2/SIP1, DDX20/GEMIN3, GEMIN4, GEMIN5, GEMIN6, GEMIN7, GEMIN8, STRAP/UNRIP and the Sm proteins SNRPB, SNRPD1, SNRPD2, SNRPD3, SNRPE, SNRPF and SNRPG. Interacts with GEMIN5; the interaction is direct. Interacts (via C-terminus) with SMN1; the interaction is direct. Interacts with SNRPD1; the interaction is direct. Interacts with SNRPD2; the interaction is direct. Interacts (via N-terminus) with SNRPF; the interaction is direct. Interacts (via N-terminus) with SNRPE; the interaction is direct. Interacts (via N-terminus) with SNRPG; the interaction is direct.

It is found in the nucleus. It localises to the gem. The protein resides in the cytoplasm. In terms of biological role, the SMN complex catalyzes the assembly of small nuclear ribonucleoproteins (snRNPs), the building blocks of the spliceosome, and thereby plays an important role in the splicing of cellular pre-mRNAs. Most spliceosomal snRNPs contain a common set of Sm proteins SNRPB, SNRPD1, SNRPD2, SNRPD3, SNRPE, SNRPF and SNRPG that assemble in a heptameric protein ring on the Sm site of the small nuclear RNA to form the core snRNP (Sm core). In the cytosol, the Sm proteins SNRPD1, SNRPD2, SNRPE, SNRPF and SNRPG (5Sm) are trapped in an inactive 6S pICln-Sm complex by the chaperone CLNS1A that controls the assembly of the core snRNP. To assemble core snRNPs, the SMN complex accepts the trapped 5Sm proteins from CLNS1A. Binding of snRNA inside 5Sm ultimately triggers eviction of the SMN complex, thereby allowing binding of SNRPD3 and SNRPB to complete assembly of the core snRNP. Within the SMN complex, GEMIN2 constrains the conformation of 5Sm, thereby promoting 5Sm binding to snRNA containing the snRNP code (a nonameric Sm site and a 3'-adjacent stem-loop), thus preventing progression of assembly until a cognate substrate is bound. The sequence is that of Gem-associated protein 2 from Mus musculus (Mouse).